The sequence spans 1796 residues: U3 small nucleolar RNA-associated protein 10 (1796 aa).

HEAT repeat units follow at residues 586–623, 656–692, 861–898, 983–1021, 1052–1089, 1161–1198, 1258–1295, 1302–1340, 1344–1383, 1492–1529, 1711–1748, and 1752–1789; these read LDLQ…SNAE, LLQE…SATG, DLTT…SDHS, DTSV…TAPD, QTIK…AYEH, QPKP…VLSS, LSIG…QESN, TVLL…KYGK, EAVA…VLQD, SAVE…SALD, DHRK…TLGE, and EMLS…ILGE. The disordered stretch occupies residues 881–901; that stretch reads TTDSPATKRRRTSSSDHSRGV.

Belongs to the HEATR1/UTP10 family. Component of the ribosomal small subunit (SSU) processome.

The protein localises to the nucleus. It localises to the nucleolus. In terms of biological role, involved in nucleolar processing of pre-18S ribosomal RNA. Involved in ribosome biosynthesis. The protein is U3 small nucleolar RNA-associated protein 10 of Pyricularia oryzae (strain 70-15 / ATCC MYA-4617 / FGSC 8958) (Rice blast fungus).